Consider the following 563-residue polypeptide: Beta-catenin-like protein 1 (563 aa).

An N-acetylmethionine modification is found at Met1. The tract at residues 1–49 is disordered; the sequence is MDVGELLSYQPNRGTKRPRDDEEEEQKMRRKQTGTRERGRYREEEMTVV. Positions 16-33 match the Nuclear localization signal motif; that stretch reads KRPRDDEEEEQKMRRKQT. Residues 34–45 show a composition bias toward basic and acidic residues; sequence GTRERGRYREEE. HEAT repeat units follow at residues 79–129 and 134–176; these read ESSV…VVAT and YHLL…TLHE. Residue Lys91 is modified to N6-acetyllysine. Positions 130-140 match the Nuclear export signal (NES) motif; it reads MPDLYHLLVEL. 5 ARM repeats span residues 178–228, 229–273, 274–323, 325–363, and 364–417; these read EEGA…MAEF, RPEM…LQDN, DENR…CLML, SNRE…AMIG, and PEGT…LLRN. Phosphoserine is present on Ser389. The stretch at 476–540 forms a coiled coil; sequence DTEEEFYLRR…HIIKEYAENI (65 aa). Ser545 bears the Phosphoserine mark.

As to quaternary structure, component of the PRP19-CDC5L splicing complex composed of a core complex comprising a homotetramer of PRPF19, CDC5L, PLRG1 and BCAS2, and at least three less stably associated proteins CTNNBL1, CWC15 and HSPA8. Interacts directly with CWC15 and CDC5L in the complex. Interacts with AICDA; the interaction is important for the antibody diversification activity of AICDA. Interacts with PRPF31 (via its NLS). Interacts (via its N-terminal NLS) with KPNA1 and KPNA2. Widely expressed with highest levels in skeletal muscle, placenta, heart, spleen, testis and thyroid.

It is found in the nucleus. The protein resides in the cytoplasm. Functionally, component of the PRP19-CDC5L complex that forms an integral part of the spliceosome and is required for activating pre-mRNA splicing. Participates in AID/AICDA-mediated somatic hypermutation (SHM) and class-switch recombination (CSR), 2 processes resulting in the production of high-affinity, mutated isotype-switched antibodies. The chain is Beta-catenin-like protein 1 (CTNNBL1) from Homo sapiens (Human).